Consider the following 321-residue polypeptide: Ferredoxin--NADP reductase (321 aa).

Residues aspartate 28, glutamine 36, tyrosine 41, alanine 81, phenylalanine 115, aspartate 274, and serine 315 each coordinate FAD.

It belongs to the ferredoxin--NADP reductase type 2 family. As to quaternary structure, homodimer. It depends on FAD as a cofactor.

It carries out the reaction 2 reduced [2Fe-2S]-[ferredoxin] + NADP(+) + H(+) = 2 oxidized [2Fe-2S]-[ferredoxin] + NADPH. This Frankia alni (strain DSM 45986 / CECT 9034 / ACN14a) protein is Ferredoxin--NADP reductase.